Here is a 250-residue protein sequence, read N- to C-terminus: Phosphoribosylaminoimidazole-succinocarboxamide synthase (250 aa).

Belongs to the SAICAR synthetase family.

The catalysed reaction is 5-amino-1-(5-phospho-D-ribosyl)imidazole-4-carboxylate + L-aspartate + ATP = (2S)-2-[5-amino-1-(5-phospho-beta-D-ribosyl)imidazole-4-carboxamido]succinate + ADP + phosphate + 2 H(+). The protein operates within purine metabolism; IMP biosynthesis via de novo pathway; 5-amino-1-(5-phospho-D-ribosyl)imidazole-4-carboxamide from 5-amino-1-(5-phospho-D-ribosyl)imidazole-4-carboxylate: step 1/2. The sequence is that of Phosphoribosylaminoimidazole-succinocarboxamide synthase from Picosynechococcus sp. (strain ATCC 27264 / PCC 7002 / PR-6) (Agmenellum quadruplicatum).